The sequence spans 146 residues: Large ribosomal subunit protein uL13 (146 aa).

Belongs to the universal ribosomal protein uL13 family. Part of the 50S ribosomal subunit.

Its function is as follows. This protein is one of the early assembly proteins of the 50S ribosomal subunit, although it is not seen to bind rRNA by itself. It is important during the early stages of 50S assembly. This chain is Large ribosomal subunit protein uL13, found in Methylobacillus flagellatus (strain ATCC 51484 / DSM 6875 / VKM B-1610 / KT).